The sequence spans 467 residues: Chromosomal replication initiator protein DnaA (467 aa).

The tract at residues 1–79 is domain I, interacts with DnaA modulators; it reads MTELDQFWPA…GELPVELRLG (79 aa). The interval 79–129 is domain II; the sequence is GAPTARPAAPVAGNSQPKAKEPAKAAASAPAAPSPAKQAAVKAIGGSHEST. The interval 84–126 is disordered; it reads RPAAPVAGNSQPKAKEPAKAAASAPAAPSPAKQAAVKAIGGSH. Over residues 102-121 the composition is skewed to low complexity; sequence KAAASAPAAPSPAKQAAVKA. Residues 130-347 form a domain III, AAA+ region region; sequence RLNPSFTFDT…GALKRVVAYA (218 aa). ATP-binding residues include Gly-175, Gly-177, Lys-178, and Thr-179. A domain IV, binds dsDNA region spans residues 348-467; sequence RFTSQNITLE…YEALLSMLRN (120 aa).

Belongs to the DnaA family. As to quaternary structure, oligomerizes as a right-handed, spiral filament on DNA at oriC.

It localises to the cytoplasm. Functionally, plays an essential role in the initiation and regulation of chromosomal replication. ATP-DnaA binds to the origin of replication (oriC) to initiate formation of the DNA replication initiation complex once per cell cycle. Binds the DnaA box (a 9 base pair repeat at the origin) and separates the double-stranded (ds)DNA. Forms a right-handed helical filament on oriC DNA; dsDNA binds to the exterior of the filament while single-stranded (ss)DNA is stabiized in the filament's interior. The ATP-DnaA-oriC complex binds and stabilizes one strand of the AT-rich DNA unwinding element (DUE), permitting loading of DNA polymerase. After initiation quickly degrades to an ADP-DnaA complex that is not apt for DNA replication. Binds acidic phospholipids. The protein is Chromosomal replication initiator protein DnaA of Chromobacterium violaceum (strain ATCC 12472 / DSM 30191 / JCM 1249 / CCUG 213 / NBRC 12614 / NCIMB 9131 / NCTC 9757 / MK).